Reading from the N-terminus, the 53-residue chain is Light-harvesting protein B-800/850 alpha chain (53 aa).

The Cytoplasmic segment spans residues 1 to 14 (MNQGKIWTVVNPSV). Residues 15–35 (GLPLLLGSVTVIAILVHAAVL) traverse the membrane as a helical segment. His-31 is a binding site for a bacteriochlorophyll. At 36-53 (SHTTWFPAYWQGGLKKAA) the chain is on the periplasmic side.

Belongs to the antenna complex alpha subunit family. In terms of assembly, the core complex is formed by different alpha and beta chains, binding bacteriochlorophyll molecules, and arranged most probably in tetrameric structures disposed around the reaction center. The non-pigmented gamma chains may constitute additional components.

It is found in the cell inner membrane. In terms of biological role, antenna complexes are light-harvesting systems, which transfer the excitation energy to the reaction centers. This is Light-harvesting protein B-800/850 alpha chain from Rhodoblastus acidophilus (Rhodopseudomonas acidophila).